A 343-amino-acid chain; its full sequence is Endoglucanase C (343 aa).

Glu140 (proton donor) is an active-site residue. Catalysis depends on Glu280, which acts as the Nucleophile.

It belongs to the glycosyl hydrolase 5 (cellulase A) family.

It carries out the reaction Endohydrolysis of (1-&gt;4)-beta-D-glucosidic linkages in cellulose, lichenin and cereal beta-D-glucans.. It functions in the pathway glycan metabolism; cellulose degradation. Its function is as follows. This enzyme catalyzes the endohydrolysis of 1,4-beta-glucosidic linkages in cellulose, lichenin and cereal beta-D-glucans. The sequence is that of Endoglucanase C (celC) from Acetivibrio thermocellus (strain ATCC 27405 / DSM 1237 / JCM 9322 / NBRC 103400 / NCIMB 10682 / NRRL B-4536 / VPI 7372) (Clostridium thermocellum).